A 291-amino-acid chain; its full sequence is Bis(5'-nucleosyl)-tetraphosphatase, symmetrical (291 aa).

Belongs to the Ap4A hydrolase family.

It carries out the reaction P(1),P(4)-bis(5'-adenosyl) tetraphosphate + H2O = 2 ADP + 2 H(+). Functionally, hydrolyzes diadenosine 5',5'''-P1,P4-tetraphosphate to yield ADP. The polypeptide is Bis(5'-nucleosyl)-tetraphosphatase, symmetrical (Coxiella burnetii (strain Dugway 5J108-111)).